We begin with the raw amino-acid sequence, 396 residues long: Methionine import ATP-binding protein MetN 2 (396 aa).

The 240-residue stretch at 41 to 280 (VSFELVGKVF…PRHGATRALL (240 aa)) folds into the ABC transporter domain. 77 to 84 (GRSGAGKS) contacts ATP.

The protein belongs to the ABC transporter superfamily. Methionine importer (TC 3.A.1.24) family. As to quaternary structure, the complex is composed of two ATP-binding proteins (MetN), two transmembrane proteins (MetI) and a solute-binding protein (MetQ).

The protein resides in the cell inner membrane. The catalysed reaction is L-methionine(out) + ATP + H2O = L-methionine(in) + ADP + phosphate + H(+). It carries out the reaction D-methionine(out) + ATP + H2O = D-methionine(in) + ADP + phosphate + H(+). In terms of biological role, part of the ABC transporter complex MetNIQ involved in methionine import. Responsible for energy coupling to the transport system. The chain is Methionine import ATP-binding protein MetN 2 from Burkholderia mallei (strain ATCC 23344).